A 482-amino-acid chain; its full sequence is Cis-aconitate decarboxylase-like protein oryM (482 aa).

The protein belongs to the PrpD family.

The protein operates within secondary metabolite biosynthesis. In terms of biological role, cis-aconitate decarboxylase-like protein; part of the gene cluster that mediates the biosynthesis of oryzines, natural products with an unusual maleidride backbone. The two subunits of the fungal fatty acid synthase oryfasA and oryfasB probably form octenoic acid. This fatty acid is most likely activated by the acyl-CoA ligase oryP to give octenyl-CoA before the citrate synthase-like protein oryE catalyzes condensation with oxaloacetate to form tricarboxylic acid. The next steps of the pathways are conjectural, but a favorite possible route has been proposed, beginning with decarboxylation and concomitant dehydration by the decarboxylase oryM, followed by tautomerization, which may lead to the production of a diene intermediate. Reduction of this diene intermediate could give the known metabolite piliformic acid. On the pathway to oryzine B and oryzine A, however, hydroxylation of the diene by the alpha-ketoglutarate-dependent dioxygenase oryG and lactonisation by the lactonohydrolases oryH or oryL could give oryzine B directly. Finally, enoyl reduction by the dehydrogenase oryD would then convert oryzine B into oryzine A. This chain is Cis-aconitate decarboxylase-like protein oryM, found in Aspergillus oryzae (strain ATCC 42149 / RIB 40) (Yellow koji mold).